A 137-amino-acid polypeptide reads, in one-letter code: Drosulfakinins (137 aa).

The N-terminal stretch at 1 to 31 (MGLRSCTHFATLVIPLWALAFCFLVVVPVPA) is a signal peptide. Positions 32 to 74 (QTNLQTSKGDRRLQDLESNMGAESDQPNANLVRPSLSRFGDKR) are excised as a propeptide. At Phe-81 the chain carries Phenylalanine amide. Residues 85 to 107 (VPRPMIPIELDLLMDNDDENTKA) constitute a propeptide that is removed on maturation. The residue at position 113 (Tyr-113) is a Sulfotyrosine. Phenylalanine amide is present on Phe-118. Tyr-130 is modified (sulfotyrosine). Phenylalanine amide is present on Phe-135.

Belongs to the gastrin/cholecystokinin family.

It localises to the secreted. Its function is as follows. Drosulfakinin-0 (DSK 0) plays diverse biological roles including regulating gut muscle contraction in adults but not in larvae. The polypeptide is Drosulfakinins (Drosophila yakuba (Fruit fly)).